The primary structure comprises 1332 residues: Elongator complex protein 1 (1332 aa).

Phosphoserine is present on residues Ser471, Ser804, Ser867, Ser1171, and Ser1174. Positions 885–1332 (VDVNELYDHS…RTQWKLSLLD (448 aa)) are mediates dimerization. A disordered region spans residues 1150–1208 (QAGLDDEVPHGQESDLFSETSSVVSGSEMSGKYSHSNSRISARSSKNRRKAERKKHSLK). Residues 1164–1177 (DLFSETSSVVSGSE) are compositionally biased toward polar residues. The segment at 1191 to 1209 (ARSSKNRRKAERKKHSLKE) is required for binding to tRNA. Residues 1194–1206 (SKNRRKAERKKHS) are compositionally biased toward basic residues.

The protein belongs to the ELP1/IKA1 family. In terms of assembly, homodimer; dimerization promotes ELP1 stability and elongator complex formation. Component of the elongator complex which consists of ELP1, ELP2, ELP3, ELP4, ELP5 and ELP6. Interacts preferentially with MAP3K14/NIK followed by IKK-alpha and IKK-beta.

It localises to the cytoplasm. Its subcellular location is the nucleus. The protein operates within tRNA modification; 5-methoxycarbonylmethyl-2-thiouridine-tRNA biosynthesis. Component of the elongator complex which is required for multiple tRNA modifications, including mcm5U (5-methoxycarbonylmethyl uridine), mcm5s2U (5-methoxycarbonylmethyl-2-thiouridine), and ncm5U (5-carbamoylmethyl uridine). The elongator complex catalyzes the formation of carboxymethyluridine in the wobble base at position 34 in tRNAs. Regulates the migration and branching of projection neurons in the developing cerebral cortex, through a process depending on alpha-tubulin acetylation. ELP1 binds to tRNA, mediating interaction of the elongator complex with tRNA. May act as a scaffold protein that assembles active IKK-MAP3K14 complexes (IKKA, IKKB and MAP3K14/NIK). This Homo sapiens (Human) protein is Elongator complex protein 1.